The following is a 331-amino-acid chain: Threonine-phosphate decarboxylase (331 aa).

Lys192 bears the N6-(pyridoxal phosphate)lysine mark.

Belongs to the class-I pyridoxal-phosphate-dependent aminotransferase family. As to quaternary structure, homodimer. The cofactor is pyridoxal 5'-phosphate.

It is found in the cytoplasm. The catalysed reaction is O-phospho-L-threonine + H(+) = (R)-1-aminopropan-2-yl phosphate + CO2. Its pathway is cofactor biosynthesis; adenosylcobalamin biosynthesis. In terms of biological role, decarboxylates L-threonine-O-3-phosphate to yield (R)-1-amino-2-propanol O-2-phosphate, the precursor for the linkage between the nucleotide loop and the corrin ring in cobalamin. The sequence is that of Threonine-phosphate decarboxylase (cobC) from Pseudomonas aeruginosa (strain ATCC 15692 / DSM 22644 / CIP 104116 / JCM 14847 / LMG 12228 / 1C / PRS 101 / PAO1).